The following is a 437-amino-acid chain: MKKLLSIEKVKGREILDSRGNPTVEAEVILSDGSVGMAAAPSGASTGAFEAVELRDGDKGRYLGNGVLNAVEHVKKELSEAVCGRNPLNQVEIDAAMIDADGTENKGKLGANAILAVSLATAKAAATAVSLPLYQYLGGTNARTLPVPMMNIINGGKHADSSLNIQEFMIMPVGAKSFSEALEHSTTVFHTLKKLLKADGYVTAVGDEGGFAPKFNSDEQALEYIVEAIKKAGFEPGSDFYIAMDAAATEMYDEAKKIGKEGNYLFWKSGELKTVDEMIDYWENLCNKYPILSLEDGLAEEDWEGWKKLTERLGSRIQLVGDDLFVTNTNRISKGIKEDISNSVLIKFNQIGSLTETLNAIEMTKNQGWTAIVSHRSGETEDTTIADIAVATNAGQIKTGAPSRSDRVAKYNQLLRIEQELGQAAIYPGKKAFKVLK.

Position 166 (Q166) interacts with (2R)-2-phosphoglycerate. Residue E208 is the Proton donor of the active site. D245, E295, and D322 together coordinate Mg(2+). (2R)-2-phosphoglycerate contacts are provided by K347, R376, S377, and K398. The Proton acceptor role is filled by K347.

It belongs to the enolase family. Requires Mg(2+) as cofactor.

It localises to the cytoplasm. Its subcellular location is the secreted. The protein localises to the cell surface. It carries out the reaction (2R)-2-phosphoglycerate = phosphoenolpyruvate + H2O. Its pathway is carbohydrate degradation; glycolysis; pyruvate from D-glyceraldehyde 3-phosphate: step 4/5. Catalyzes the reversible conversion of 2-phosphoglycerate (2-PG) into phosphoenolpyruvate (PEP). It is essential for the degradation of carbohydrates via glycolysis. This is Enolase from Lachnoclostridium phytofermentans (strain ATCC 700394 / DSM 18823 / ISDg) (Clostridium phytofermentans).